Here is a 415-residue protein sequence, read N- to C-terminus: Serine hydroxymethyltransferase (415 aa).

Residues L122 and 126–128 (GHL) contribute to the (6S)-5,6,7,8-tetrahydrofolate site. K230 is modified (N6-(pyridoxal phosphate)lysine).

The protein belongs to the SHMT family. As to quaternary structure, homodimer. The cofactor is pyridoxal 5'-phosphate.

The protein resides in the cytoplasm. The enzyme catalyses (6R)-5,10-methylene-5,6,7,8-tetrahydrofolate + glycine + H2O = (6S)-5,6,7,8-tetrahydrofolate + L-serine. It functions in the pathway one-carbon metabolism; tetrahydrofolate interconversion. It participates in amino-acid biosynthesis; glycine biosynthesis; glycine from L-serine: step 1/1. Catalyzes the reversible interconversion of serine and glycine with tetrahydrofolate (THF) serving as the one-carbon carrier. This reaction serves as the major source of one-carbon groups required for the biosynthesis of purines, thymidylate, methionine, and other important biomolecules. Also exhibits THF-independent aldolase activity toward beta-hydroxyamino acids, producing glycine and aldehydes, via a retro-aldol mechanism. In Leptothrix cholodnii (strain ATCC 51168 / LMG 8142 / SP-6) (Leptothrix discophora (strain SP-6)), this protein is Serine hydroxymethyltransferase.